We begin with the raw amino-acid sequence, 206 residues long: Transmembrane emp24 domain-containing protein bai (206 aa).

The N-terminal stretch at 1-17 (MAKATFFYFLFIGYVWP) is a signal peptide. The Lumenal portion of the chain corresponds to 18 to 172 (IDSVMFNLAP…RDTNEKTNSR (155 aa)). A GOLD domain is found at 30–140 (QKCLKEDIQA…LKPLEVDLKR (111 aa)). The chain crosses the membrane as a helical span at residues 173 to 193 (VLFFSIFSMCCLLGLATWQVL). The Cytoplasmic portion of the chain corresponds to 194 to 206 (YLRRYFKAKKLIE).

This sequence belongs to the EMP24/GP25L family.

The protein resides in the membrane. Functionally, eca and bai are essential, though not redundant, for dorsoventral patterning of the embryo. Specifically required during early embryogenesis for the activity of maternal tkv, while the zygotic tkv is not affected. The protein is Transmembrane emp24 domain-containing protein bai of Drosophila persimilis (Fruit fly).